The primary structure comprises 1761 residues: Probable serine/threonine-protein kinase DDB_G0282963 (1761 aa).

Disordered regions lie at residues 18 to 47 (PQQQQIPQQQEQQQQQQQQQQQQQQQQQQQ), 60 to 269 (QQQQ…SNKL), 322 to 458 (SISN…SDFN), 545 to 717 (QNSS…KSSQ), 749 to 783 (LKNSPFPPSSPILSPQTDDPNNNNNNNNSNTTISQ), 798 to 830 (AFYNSGSNNNNNNNNNNNNNNNNNNNNTNSTSA), 842 to 956 (TTQI…KSVF), 972 to 997 (NSHHHHNSGNNSSNSNNNNNDDEVPT), 1081 to 1151 (ITSA…CNVN), 1179 to 1305 (KNNC…PSKQ), 1318 to 1343 (ALDSTNNNNNNNNDTDSTSSNMGTPT), and 1355 to 1459 (QHSR…ECWK). Low complexity-rich tracts occupy residues 19–47 (QQQQIPQQQEQQQQQQQQQQQQQQQQQQQ), 60–85 (QQQQEQQNNNNNINDNINGNNNSNEI), 92–105 (NITNNNGTSIIISL), and 112–237 (ALNS…NNNN). The span at 238-256 (KQMTPPTFKNNLQVKHQPQ) shows a compositional bias: polar residues. Low complexity-rich tracts occupy residues 257-269 (SSSGGSIGGSNKL), 322-341 (SISNTTNETTTTTTTTTNTT), 348-451 (GSIG…NNGV), and 546-572 (NSSLNINNNNNSSNNNNINNNNNNNNI). Positions 573–582 (MAGSTSSVIY) are enriched in polar residues. The segment covering 591–627 (NENNNNNINNDNTVCNINNNNNSNNNKSNNSNNSNNS) has biased composition (low complexity). Over residues 633 to 643 (SSDEEPETDSD) the composition is skewed to acidic residues. Composition is skewed to low complexity over residues 674 to 697 (NNTNTNTNTHNTYNNNKNNNNNNT), 759 to 778 (PILSPQTDDPNNNNNNNNSN), 805 to 824 (NNNNNNNNNNNNNNNNNNNN), 847 to 885 (TSDIDTSNSDNNNNNNNNNTSDNNFNDYNNDYNNDYNNY), 902 to 956 (TKMS…KSVF), 979 to 990 (SGNNSSNSNNNN), 1081 to 1149 (ITSA…CTCN), and 1180 to 1262 (NNCT…SNNN). The span at 1263–1273 (NHHHHHHHHHN) shows a compositional bias: basic residues. Low complexity-rich tracts occupy residues 1288 to 1303 (SSSSSPWSSPALSSPS), 1320 to 1338 (DSTNNNNNNNNDTDSTSSN), 1359 to 1386 (NNSSNNQNNNNINNNNNNNNNNNNNNNN), and 1393 to 1454 (SNST…MNSN). The 269-residue stretch at 1476–1744 (LFLIKKIGAG…AITSLYDDYI (269 aa)) folds into the Protein kinase domain. ATP-binding positions include 1482 to 1490 (IGAGSFSKV) and lysine 1503. Residue aspartate 1597 is the Proton acceptor of the active site.

This sequence belongs to the protein kinase superfamily. TKL Ser/Thr protein kinase family.

The enzyme catalyses L-seryl-[protein] + ATP = O-phospho-L-seryl-[protein] + ADP + H(+). The catalysed reaction is L-threonyl-[protein] + ATP = O-phospho-L-threonyl-[protein] + ADP + H(+). The sequence is that of Probable serine/threonine-protein kinase DDB_G0282963 from Dictyostelium discoideum (Social amoeba).